Reading from the N-terminus, the 186-residue chain is Astacin-like metalloprotease toxin 5 (186 aa).

A Peptidase M12A domain is found at 1 to 186 (NAVKYDQQLW…CHSKRKAELL (186 aa)). Cystine bridges form between Cys42–Cys177 and Cys63–Cys84. His92 is a binding site for Zn(2+). Residue Glu93 is part of the active site. Residues His96 and His102 each coordinate Zn(2+). Asn122 is a glycosylation site (N-linked (GlcNAc...) asparagine).

Monomer. Zn(2+) is required as a cofactor. As to expression, expressed by the venom gland.

It localises to the secreted. Its activity is regulated as follows. Inhibited by 1,10-phenanthroline. Zinc metalloprotease. Provoques deadhesion of endothelial cells from cell cultures, and also degradation of fibronectin, fibrinogen and gelatin in vitro. Its role in the venom is not fully understood but it might act as a spreading factor that facilitates diffusion of other venom toxins. Alternatively, it might be involved in the proteolytic processing of other venom toxins or it might play a role in extra-oral digestion of prey. This Loxosceles gaucho (Spider) protein is Astacin-like metalloprotease toxin 5.